Here is a 64-residue protein sequence, read N- to C-terminus: Large ribosomal subunit protein bL33c (64 aa).

Belongs to the bacterial ribosomal protein bL33 family.

It is found in the plastid. It localises to the chloroplast. The chain is Large ribosomal subunit protein bL33c from Huperzia lucidula (Shining clubmoss).